The following is a 147-amino-acid chain: Ribonuclease 4 (147 aa).

Positions 1–28 (MALQRTHSLLLLLLLTLLGLGLVQPSYG) are cleaved as a signal peptide. A Pyrrolidone carboxylic acid modification is found at Gln-29. Positions 35, 40, 68, 71, and 72 each coordinate dUMP. His-40 functions as the Proton acceptor in the catalytic mechanism. 4 disulfide bridges follow: Cys-53-Cys-109, Cys-67-Cys-120, Cys-85-Cys-135, and Cys-92-Cys-99. His-144 (proton donor) is an active-site residue. Phe-145 is a binding site for dUMP.

It belongs to the pancreatic ribonuclease family.

It is found in the secreted. Functionally, cleaves preferentially after uridine bases. Has antimicrobial activity against uropathogenic E.coli (UPEC). Probably contributes to urinary tract sterility. The chain is Ribonuclease 4 (RNASE4) from Pan troglodytes (Chimpanzee).